The primary structure comprises 447 residues: Ribosomal protein uS12 methylthiotransferase RimO (447 aa).

The 111-residue stretch at Pro10–Pro120 folds into the MTTase N-terminal domain. [4Fe-4S] cluster is bound by residues Cys19, Cys55, Cys84, Cys153, Cys157, and Cys160. The 239-residue stretch at Leu139–Ala377 folds into the Radical SAM core domain. Positions Gln380–Leu447 constitute a TRAM domain.

The protein belongs to the methylthiotransferase family. RimO subfamily. [4Fe-4S] cluster is required as a cofactor.

It localises to the cytoplasm. The enzyme catalyses L-aspartate(89)-[ribosomal protein uS12]-hydrogen + (sulfur carrier)-SH + AH2 + 2 S-adenosyl-L-methionine = 3-methylsulfanyl-L-aspartate(89)-[ribosomal protein uS12]-hydrogen + (sulfur carrier)-H + 5'-deoxyadenosine + L-methionine + A + S-adenosyl-L-homocysteine + 2 H(+). Catalyzes the methylthiolation of an aspartic acid residue of ribosomal protein uS12. The protein is Ribosomal protein uS12 methylthiotransferase RimO of Pseudomonas savastanoi pv. phaseolicola (strain 1448A / Race 6) (Pseudomonas syringae pv. phaseolicola (strain 1448A / Race 6)).